The following is a 630-amino-acid chain: tRNA uridine 5-carboxymethylaminomethyl modification enzyme MnmG (630 aa).

13-18 (GGGHAG) is a binding site for FAD. 273–287 (GPRYCPSIEDKVMRF) is a binding site for NAD(+).

The protein belongs to the MnmG family. In terms of assembly, homodimer. Heterotetramer of two MnmE and two MnmG subunits. The cofactor is FAD.

It is found in the cytoplasm. Its function is as follows. NAD-binding protein involved in the addition of a carboxymethylaminomethyl (cmnm) group at the wobble position (U34) of certain tRNAs, forming tRNA-cmnm(5)s(2)U34. The polypeptide is tRNA uridine 5-carboxymethylaminomethyl modification enzyme MnmG (Actinobacillus pleuropneumoniae serotype 3 (strain JL03)).